Here is a 425-residue protein sequence, read N- to C-terminus: Histidine--tRNA ligase (425 aa).

It belongs to the class-II aminoacyl-tRNA synthetase family. In terms of assembly, homodimer.

It localises to the cytoplasm. The enzyme catalyses tRNA(His) + L-histidine + ATP = L-histidyl-tRNA(His) + AMP + diphosphate + H(+). The protein is Histidine--tRNA ligase of Streptococcus uberis (strain ATCC BAA-854 / 0140J).